Consider the following 144-residue polypeptide: Giant hemoglobins B chain (144 aa).

The 142-residue stretch at V3–G144 folds into the Globin domain. Residue H96 coordinates heme b.

The protein belongs to the globin family. As to quaternary structure, part of giant hemoglobin C1, V1 and V2. This worm has three different extracellular Hbs: two dissolved in the vascular blood, V1 (CA. 3,500 kDa) and V2 (CA. 400 kDa), and one in the coelomic fluid, C1 (CA. 400 kDa). V1 consists of four heme-containing, globin chains (B-E) and four linker chains (L1-L4). V2 consists of six globin chains (A-F) and C1 consists of five globin chains (A-E).

The protein resides in the secreted. Its subcellular location is the extracellular space. In Riftia pachyptila (Vent tube worm), this protein is Giant hemoglobins B chain.